The following is a 183-amino-acid chain: Disulfide bond formation protein B 2 (183 aa).

Topologically, residues 1–9 (MSLACSRSL) are cytoplasmic. Residues 10 to 26 (FFMAFTAGILALGASYY) form a helical membrane-spanning segment. At 27-44 (LEYAVGLVPCSLCLVQRL) the chain is on the periplasmic side. A disulfide bond links cysteine 36 and cysteine 39. A helical transmembrane segment spans residues 45–61 (FMSVLTLCCGLAAVHGP). Over 62-68 (QRVGLSL) the chain is Cytoplasmic. The chain crosses the membrane as a helical span at residues 69–85 (YWMVTLLSSLGGTTAAW). At 86 to 142 (RQVLFQSDSLQELAHCAPNPEEMFSSLPWLCALMRMFNDTADCAELSWTLFDLSIPE) the chain is on the periplasmic side. An intrachain disulfide couples cysteine 101 to cysteine 128. A helical transmembrane segment spans residues 143-161 (WSLLFFVGMSILAVYQLLR). Topologically, residues 162–183 (QVWMALQRPLSGQPSHPALVRD) are cytoplasmic.

This sequence belongs to the DsbB family.

Its subcellular location is the cell inner membrane. Required for disulfide bond formation in some periplasmic proteins. Acts by oxidizing the DsbA protein. The chain is Disulfide bond formation protein B 2 from Pseudomonas fluorescens (strain Pf0-1).